The sequence spans 149 residues: D-aminoacyl-tRNA deacylase (149 aa).

Residues 137–138 (GP) carry the Gly-cisPro motif, important for rejection of L-amino acids motif.

It belongs to the DTD family. As to quaternary structure, homodimer.

It is found in the cytoplasm. It catalyses the reaction glycyl-tRNA(Ala) + H2O = tRNA(Ala) + glycine + H(+). The catalysed reaction is a D-aminoacyl-tRNA + H2O = a tRNA + a D-alpha-amino acid + H(+). In terms of biological role, an aminoacyl-tRNA editing enzyme that deacylates mischarged D-aminoacyl-tRNAs. Also deacylates mischarged glycyl-tRNA(Ala), protecting cells against glycine mischarging by AlaRS. Acts via tRNA-based rather than protein-based catalysis; rejects L-amino acids rather than detecting D-amino acids in the active site. By recycling D-aminoacyl-tRNA to D-amino acids and free tRNA molecules, this enzyme counteracts the toxicity associated with the formation of D-aminoacyl-tRNA entities in vivo and helps enforce protein L-homochirality. The sequence is that of D-aminoacyl-tRNA deacylase from Desulforamulus reducens (strain ATCC BAA-1160 / DSM 100696 / MI-1) (Desulfotomaculum reducens).